Reading from the N-terminus, the 405-residue chain is Potassium channel subfamily K member 18 (405 aa).

A helical transmembrane segment spans residues 43–63 (LPGLCFLCCLVTYALVGAALF). N-linked (GlcNAc...) asparagine glycosylation occurs at Asn-94. The segment at residues 125–151 (FLSALFFCCTVFSTVGYGHMYPVTRLG) is an intramembrane region (pore-forming). Positions 138, 139, 140, and 141 each coordinate K(+). A selectivity filter 1 region spans residues 138–143 (TVGYGH). The chain crosses the membrane as a helical span at residues 153–173 (FLCMLYALFGIPLMFLVLTDI). The segment at 221–226 (PQIVID) is interaction with calcineurin. Residues 272 to 277 (RSNSCP) are interaction with YWHAH. 2 positions are modified to phosphoserine: Ser-275 and Ser-287. A helical membrane pass occupies residues 304–324 (IPLPVIALVIFAYISCAAAIL). The pore-forming intramembrane region spans 337-351 (FYFCFVTLTTIGFGD). Positions 346 to 351 (TIGFGD) are selectivity filter 2. A helical membrane pass occupies residues 358–378 (HFFLFFSIYIIVGMEILFIAF).

The protein belongs to the two pore domain potassium channel (TC 1.A.1.8) family. Homodimer. Heterodimer with KCNK2. Heterodimer with KCNK10. Interacts with calcineurin. Interacts with YWHAH, in a phosphorylation-dependent manner. Post-translationally, phosphorylation of Ser-275 is required for the binding of 14-3-3eta/YWHAH. Calcineurin-mediated dephosphorylation of Ser-287 enhances channel activity. In terms of processing, N-glycosylated.

Its subcellular location is the cell membrane. It carries out the reaction K(+)(in) = K(+)(out). With respect to regulation, activated by volatile anesthetics, such as isoflurane and inhibited by local anesthetics such as bupivacaine and lidocaine. Inhibited by extracellular acidic pH. Inhibited by Zn(2+) ions. In terms of biological role, k(+) channel that conducts outward and inward rectifying currents at depolarized and hyperpolarized membrane potentials, respectively. The outward rectifying currents are voltage-dependent, coupled to K(+) electrochemical gradient across the membrane, whereas the inward currents can be induced in response to activation of Ca(2+)-mobilizing receptors. Homo- and heterodimerizes to form functional channels with distinct regulatory and gating properties. In trigeminal ganglia sensory neurons, the heterodimers of KCNK18/TRESK and KCNK2/TREK-1 or KCNK10/TREK-2 inhibit neuronal firing and neurogenic inflammation by stabilizing the resting membrane potential at K(+) equilibrium potential as well as by regulating the threshold of action potentials and the spike frequency. In thymocytes, conducts K(+) currents upon T cell receptor (TCR) signaling leading to sustained Ca(2+) influx and NF-kappa-B activation, FOXP3 transcription and positive selection of regulatory T cell (Treg) progenitor subsets. Appears to mediate the analgesics effects of hydroxy-alpha-sanshool, a metabolite naturally present in Schezuan pepper and other Xanthoxylum plants. The polypeptide is Potassium channel subfamily K member 18 (Kcnk18) (Rattus norvegicus (Rat)).